Here is a 307-residue protein sequence, read N- to C-terminus: D-alanine--D-alanine ligase (307 aa).

One can recognise an ATP-grasp domain in the interval 108–301 (KEVFAAAGLP…FPEFCAWLVE (194 aa)). 135–185 (LPPPYVVKPNAEGSSVGVYIVHEDANGPPQLAADMPQDLMVETYVPGRELT) is an ATP binding site. 3 residues coordinate Mg(2+): Asp252, Glu268, and Asn270.

It belongs to the D-alanine--D-alanine ligase family. The cofactor is Mg(2+). It depends on Mn(2+) as a cofactor.

It is found in the cytoplasm. The catalysed reaction is 2 D-alanine + ATP = D-alanyl-D-alanine + ADP + phosphate + H(+). The protein operates within cell wall biogenesis; peptidoglycan biosynthesis. Functionally, cell wall formation. The polypeptide is D-alanine--D-alanine ligase (Cereibacter sphaeroides (strain ATCC 17029 / ATH 2.4.9) (Rhodobacter sphaeroides)).